The following is a 450-amino-acid chain: MSKISKIKAREVLDSRGNPTIQVEVWTEAGGHGSAIVPSGASTGTREALELRDGGTVYESNWFGGKGVQTAVDNVNNKIAVLLKGHCVLNQRKLDNMMLQLDKTENKSALGANAILGVSLAIAKAAADELKIPLYRYLGGTNAHQLPVPMLNVINGGEHASNTLDFQEFMIMPLGAKTFKQALQVANKIFHTLAKLLKKAGHGTQVGDEGGFAPNLKSHEEALDFLVKAIEEAGFRPATEGENAVAIAIDAAASELYHDGIYTFKKLKKAIEEKRQGFEPTRVQFTTEEMIQYFGHLFHTYPIISVEDGLAESDWKGFVRFTQKFGKTHQIVGDDLTVTNAKILAEAIEKKAINSILIKLNQIGTVSETLDTIELAHKAGYTTVISHRSGESEDTTIADLAVAVNAGQIKTGSLSRTDRIAKYNRLLAIEEAIQSTAQYKGEKVFFNIKK.

Glutamine 167 provides a ligand contact to (2R)-2-phosphoglycerate. Glutamate 209 functions as the Proton donor in the catalytic mechanism. Aspartate 250, glutamate 307, and aspartate 334 together coordinate Mg(2+). The (2R)-2-phosphoglycerate site is built by lysine 359, arginine 388, serine 389, and lysine 410. Lysine 359 acts as the Proton acceptor in catalysis.

This sequence belongs to the enolase family. The cofactor is Mg(2+).

It localises to the cytoplasm. Its subcellular location is the secreted. It is found in the cell surface. The enzyme catalyses (2R)-2-phosphoglycerate = phosphoenolpyruvate + H2O. It functions in the pathway carbohydrate degradation; glycolysis; pyruvate from D-glyceraldehyde 3-phosphate: step 4/5. Its function is as follows. Catalyzes the reversible conversion of 2-phosphoglycerate (2-PG) into phosphoenolpyruvate (PEP). It is essential for the degradation of carbohydrates via glycolysis. In terms of biological role, 'Moonlights' as a plasminogen receptor and plasmin activator. Contributes to host (pig) cell adhesion; anti-enolase antibodies decrease binding to porcine kidney cells about 60%. Binds host plasminogen and fibronectin in vitro; enhances the activity of host tissue-specific plasminogen activator (tPA), and helps plasminogen and tPA degrade articifial host extracellular matrices. This is Enolase from Mesomycoplasma hyorhinis (strain HUB-1) (Mycoplasma hyorhinis).